A 508-amino-acid polypeptide reads, in one-letter code: Cytochrome P450 monooxygenase BipB (508 aa).

A helical membrane pass occupies residues 11 to 31 (ELAWLLLGPLVLFYVFKLFIY). Position 448 (Cys-448) interacts with heme.

It belongs to the cytochrome P450 family. Requires heme as cofactor.

It is found in the membrane. It participates in sesquiterpene biosynthesis. In terms of biological role, cytochrome P450 monooxygenase; part of the minimal biosynthetic bip cluster that mediates the biosynthesis of bridged polycyclic sesquiterpenoids derived from sativene, isosativene, and longifolene. The sesquiterpene cyclase BipA acts as a versatile cyclase that converts farnesyl diphosphate (FPP) into (-)-sativene as the dominant product and (-)-isosativene and (-)-longifolene as minor ones. The cytochrome P450 monooxygenase BipB then hydroxylates different enantiomeric sesquiterpenes, such as (-)-longifolene and (+)-longifolene, at C-15 and C-14. The C-15- or both C-15- and C-14-hydroxylated products are further oxidized by unclustered oxidases, resulting in a structurally diverse array of sesquiterpenoids. The BipB-catalyzed hydroxylation at C-15 serves as an initiator for the oxidation by the unclustered oxidases. In Cochliobolus sativus (Common root rot and spot blotch fungus), this protein is Cytochrome P450 monooxygenase BipB.